A 222-amino-acid chain; its full sequence is N-(5'-phosphoribosyl)anthranilate isomerase (222 aa).

The protein belongs to the TrpF family.

It carries out the reaction N-(5-phospho-beta-D-ribosyl)anthranilate = 1-(2-carboxyphenylamino)-1-deoxy-D-ribulose 5-phosphate. The protein operates within amino-acid biosynthesis; L-tryptophan biosynthesis; L-tryptophan from chorismate: step 3/5. The sequence is that of N-(5'-phosphoribosyl)anthranilate isomerase from Brevibacillus brevis (strain 47 / JCM 6285 / NBRC 100599).